The sequence spans 306 residues: uncharacterized protein (306 aa).

Positions 13 to 39 (NMLNEIAANNNLLNNKNNQTNQLNNNQ) form a coiled coil. Disordered stretches follow at residues 44–76 (YNNQ…HQQN), 103–204 (DSKE…QSGQ), and 216–249 (QKQL…TMQH). The span at 119-201 (HQQPIQNNPS…QFAQPNQYNQ (83 aa)) shows a compositional bias: low complexity. The span at 218-235 (QLDKNQPEKIPSKPEKNQ) shows a compositional bias: basic and acidic residues. A helical membrane pass occupies residues 279 to 299 (LFDYIIIPIALVLVFLFLVHP).

It is found in the membrane. This is an uncharacterized protein from Acanthamoeba polyphaga mimivirus (APMV).